The sequence spans 190 residues: Large ribosomal subunit protein bL25 (190 aa).

It belongs to the bacterial ribosomal protein bL25 family. CTC subfamily. Part of the 50S ribosomal subunit; part of the 5S rRNA/L5/L18/L25 subcomplex. Contacts the 5S rRNA. Binds to the 5S rRNA independently of L5 and L18.

Functionally, this is one of the proteins that binds to the 5S RNA in the ribosome where it forms part of the central protuberance. This Neisseria meningitidis serogroup C / serotype 2a (strain ATCC 700532 / DSM 15464 / FAM18) protein is Large ribosomal subunit protein bL25.